Here is a 297-residue protein sequence, read N- to C-terminus: tRNA dimethylallyltransferase (297 aa).

ATP is bound at residue 15–22 (GPTASGKS). 17–22 (TASGKS) serves as a coordination point for substrate. Interaction with substrate tRNA regions lie at residues 40-43 (DSMQ) and 164-168 (QRIVR).

It belongs to the IPP transferase family. As to quaternary structure, monomer. It depends on Mg(2+) as a cofactor.

It carries out the reaction adenosine(37) in tRNA + dimethylallyl diphosphate = N(6)-dimethylallyladenosine(37) in tRNA + diphosphate. Functionally, catalyzes the transfer of a dimethylallyl group onto the adenine at position 37 in tRNAs that read codons beginning with uridine, leading to the formation of N6-(dimethylallyl)adenosine (i(6)A). The chain is tRNA dimethylallyltransferase from Rhizobium etli (strain CIAT 652).